Reading from the N-terminus, the 417-residue chain is Serine hydroxymethyltransferase (417 aa).

Residues Leu122 and 126–128 (GHL) each bind (6S)-5,6,7,8-tetrahydrofolate. At Lys230 the chain carries N6-(pyridoxal phosphate)lysine. A (6S)-5,6,7,8-tetrahydrofolate-binding site is contributed by 355-357 (SPF).

The protein belongs to the SHMT family. In terms of assembly, homodimer. The cofactor is pyridoxal 5'-phosphate.

The protein resides in the cytoplasm. The enzyme catalyses (6R)-5,10-methylene-5,6,7,8-tetrahydrofolate + glycine + H2O = (6S)-5,6,7,8-tetrahydrofolate + L-serine. It participates in one-carbon metabolism; tetrahydrofolate interconversion. The protein operates within amino-acid biosynthesis; glycine biosynthesis; glycine from L-serine: step 1/1. Catalyzes the reversible interconversion of serine and glycine with tetrahydrofolate (THF) serving as the one-carbon carrier. This reaction serves as the major source of one-carbon groups required for the biosynthesis of purines, thymidylate, methionine, and other important biomolecules. Also exhibits THF-independent aldolase activity toward beta-hydroxyamino acids, producing glycine and aldehydes, via a retro-aldol mechanism. The polypeptide is Serine hydroxymethyltransferase (Francisella tularensis subsp. tularensis (strain FSC 198)).